We begin with the raw amino-acid sequence, 273 residues long: Putative pyruvate, phosphate dikinase regulatory protein 2 (273 aa).

151–158 is an ADP binding site; sequence GISRTSKT.

The protein belongs to the pyruvate, phosphate/water dikinase regulatory protein family. PDRP subfamily.

It carries out the reaction N(tele)-phospho-L-histidyl/L-threonyl-[pyruvate, phosphate dikinase] + ADP = N(tele)-phospho-L-histidyl/O-phospho-L-threonyl-[pyruvate, phosphate dikinase] + AMP + H(+). It catalyses the reaction N(tele)-phospho-L-histidyl/O-phospho-L-threonyl-[pyruvate, phosphate dikinase] + phosphate + H(+) = N(tele)-phospho-L-histidyl/L-threonyl-[pyruvate, phosphate dikinase] + diphosphate. In terms of biological role, bifunctional serine/threonine kinase and phosphorylase involved in the regulation of the pyruvate, phosphate dikinase (PPDK) by catalyzing its phosphorylation/dephosphorylation. This chain is Putative pyruvate, phosphate dikinase regulatory protein 2, found in Staphylococcus saprophyticus subsp. saprophyticus (strain ATCC 15305 / DSM 20229 / NCIMB 8711 / NCTC 7292 / S-41).